Here is a 466-residue protein sequence, read N- to C-terminus: Glutamate decarboxylase beta (466 aa).

Substrate-binding residues include Thr62 and Asn83. Pyridoxal 5'-phosphate contacts are provided by residues 126–127 (SS), Thr212, and His275. N6-(pyridoxal phosphate)lysine is present on Lys276. 3 positions are modified to N6-acetyllysine: Lys446, Lys453, and Lys464.

This sequence belongs to the group II decarboxylase family. In terms of assembly, homohexamer composed of three dimers. It depends on pyridoxal 5'-phosphate as a cofactor.

It catalyses the reaction L-glutamate + H(+) = 4-aminobutanoate + CO2. Functionally, converts glutamate to gamma-aminobutyrate (GABA), consuming one intracellular proton in the reaction. The gad system helps to maintain a near-neutral intracellular pH when cells are exposed to extremely acidic conditions. The ability to survive transit through the acidic conditions of the stomach is essential for successful colonization of the mammalian host by commensal and pathogenic bacteria. The chain is Glutamate decarboxylase beta (gadB) from Escherichia coli O6:H1 (strain CFT073 / ATCC 700928 / UPEC).